The following is a 241-amino-acid chain: Probable transcriptional regulatory protein RSc2190 (241 aa).

It belongs to the TACO1 family.

Its subcellular location is the cytoplasm. In Ralstonia nicotianae (strain ATCC BAA-1114 / GMI1000) (Ralstonia solanacearum), this protein is Probable transcriptional regulatory protein RSc2190.